Consider the following 306-residue polypeptide: D-alanine--D-alanine ligase B (306 aa).

In terms of domain architecture, ATP-grasp spans 101–303; it reads KLLWQGAGLP…FSQLVVRILE (203 aa). Position 134–189 (134–189) interacts with ATP; sequence ISALGLPVIVKPSREGSSVGMSKVVAENALQDALRLAFQHDEEVLIEKWLSGPEFT. Residues Asp-257, Glu-270, and Asn-272 each coordinate Mg(2+).

It belongs to the D-alanine--D-alanine ligase family. It depends on Mg(2+) as a cofactor. Mn(2+) is required as a cofactor.

The protein localises to the cytoplasm. It carries out the reaction 2 D-alanine + ATP = D-alanyl-D-alanine + ADP + phosphate + H(+). The protein operates within cell wall biogenesis; peptidoglycan biosynthesis. Cell wall formation. The sequence is that of D-alanine--D-alanine ligase B from Shigella flexneri.